Consider the following 183-residue polypeptide: Adenine phosphoribosyltransferase (183 aa).

The protein belongs to the purine/pyrimidine phosphoribosyltransferase family. As to quaternary structure, homodimer.

It is found in the cytoplasm. The enzyme catalyses AMP + diphosphate = 5-phospho-alpha-D-ribose 1-diphosphate + adenine. Its pathway is purine metabolism; AMP biosynthesis via salvage pathway; AMP from adenine: step 1/1. In terms of biological role, catalyzes a salvage reaction resulting in the formation of AMP, that is energically less costly than de novo synthesis. This chain is Adenine phosphoribosyltransferase, found in Corynebacterium kroppenstedtii (strain DSM 44385 / JCM 11950 / CIP 105744 / CCUG 35717).